The following is a 433-amino-acid chain: MSQTLQAVRGMNDILPDEAETWEHFEDIVRDWLKSYGYRPIRMPLVEPTPLFKRAIGEVTDIVEKEMYSFEDALNGEHLTLRPEGTASCVRAAIQHNLVAGHGPQRLYYHGPMFRHERPQKGRYRQFHQIGVEALGFAGPDIDAEHIIMCARLWDDLGLEDVSLEINSLGAAEERAQHRAALIAYLEQHRDKLDEDGQRRLYTNPLRILDTKNPDLQPVVEAAPRLADYLGDESRAHFDAVQLFLKDAGIPYRINHRLVRGLDYYNRTVFEWVTTRLGAQGTVCAGGRYDGLVAQLGGKPQPAAGFAMGVERLLALWQESGGEPERQAPDVYVVHLGEAAQRLAFQAAEALRGHGFSAVLHCGGGSFKSQMKKADGSGASIAVVIGEDEAAAGEVGVKPLRGPGGQQRVTLAALAEAVGGVLYSDQGDDDGGV.

Belongs to the class-II aminoacyl-tRNA synthetase family. As to quaternary structure, homodimer.

The protein localises to the cytoplasm. The enzyme catalyses tRNA(His) + L-histidine + ATP = L-histidyl-tRNA(His) + AMP + diphosphate + H(+). The sequence is that of Histidine--tRNA ligase from Azoarcus sp. (strain BH72).